The primary structure comprises 811 residues: RFX-like DNA-binding protein RFX1 (811 aa).

2 disordered regions span residues 48 to 92 (EPTS…TYLP) and 111 to 156 (LLHQ…QRQP). Residues 51-70 (SRGSNDNSNGPSNGSSVNSN) show a composition bias toward low complexity. Residues 140-149 (SPTPTQPPAQ) show a composition bias toward pro residues. S173 is subject to Phosphoserine. The segment at 181 to 222 (KSEETLNNNPPTAAKRTNTFPSIPSSTKKQKTSQEKRISSIS) is disordered. Positions 185–204 (TLNNNPPTAAKRTNTFPSIP) are enriched in polar residues. The segment at residues 285–360 (ALLWLMKNCK…YHYCGLKLTV (76 aa)) is a DNA-binding region (RFX-type winged-helix). Residues 377 to 391 (LVHNNDPISPLSSPS) are compositionally biased toward low complexity. Residues 377 to 461 (LVHNNDPISP…AANNPTGTLS (85 aa)) form a disordered region. A compositionally biased stretch (polar residues) spans 409–428 (NRKSLSRTGSPVKQSSNDNP). A compositionally biased stretch (basic and acidic residues) spans 434-445 (ESQHPNETEANK).

This sequence belongs to the RFX family.

The protein is RFX-like DNA-binding protein RFX1 (RFX1) of Saccharomyces cerevisiae (strain ATCC 204508 / S288c) (Baker's yeast).